Reading from the N-terminus, the 499-residue chain is Isoflavone 2'-hydroxylase (499 aa).

Cys436 serves as a coordination point for heme.

The protein belongs to the cytochrome P450 family. It depends on heme as a cofactor.

Its subcellular location is the membrane. The catalysed reaction is a 2'-unsubstituted isoflavone + reduced [NADPH--hemoprotein reductase] + O2 = a 2'-hydroxyisoflavone + oxidized [NADPH--hemoprotein reductase] + H2O + H(+). Catalyzes the hydroxylation of isoflavones, daidzein and formononetin, to yield 2'-hydroxyisoflavones, 2'-hydroxydaidzein, and 2'-hydroxyformononetin, respectively. The sequence is that of Isoflavone 2'-hydroxylase (CYP81E1) from Glycyrrhiza echinata (Licorice).